A 344-amino-acid polypeptide reads, in one-letter code: Serine proteinase inhibitor 2 (344 aa).

Belongs to the serpin family. Poxviruses subfamily.

Its subcellular location is the host cytoplasm. In terms of biological role, viral serpin that inhibits both cysteine and serine proteinases involved in the regulation of host inflammatory and apoptosis processes. Major anti-apoptotic protein which inhibits both intrinsic and extrinsic pathways and strongly cleaves host CASP1 and CASP8 but is a rather poor inhibitor of host CASP3. Prevents the proteolytic activity of host interleukin-1-beta converting enzyme (ICE) and ICE-like enzymes. Can also block apoptosis through host tumor necrosis factor (TNF) receptor. The inhibition of host ICE is an example of a 'cross-class' interaction, in which a serpin inhibits a non-serine proteinase. Also inhibits granzyme B. The chain is Serine proteinase inhibitor 2 (OPG199) from Homo sapiens (Human).